Here is a 310-residue protein sequence, read N- to C-terminus: Protein LRATD2 (310 aa).

Residues 1–76 form a disordered region; the sequence is MGNQVEKLTH…PPPQPQPYDP (76 aa). Gly residues predominate over residues 54-64; the sequence is PDGGGLPDGGD. The segment covering 65–74 has biased composition (pro residues); it reads GPPPPQPQPY. One can recognise an LRAT domain in the interval 122–217; it reads VEFVSQAQYP…CRYGKREFKI (96 aa). Residues 274–310 are disordered; that stretch reads HPAEPEEGDSNVARTTPPPGRPPAPSSEEEDGEAVAH. A compositionally biased stretch (pro residues) spans 289–298; that stretch reads TPPPGRPPAP. A compositionally biased stretch (acidic residues) spans 300-310; the sequence is SEEEDGEAVAH.

The protein belongs to the LRATD family. Expressed in esophageal squamous cell carcinomas.

The protein is Protein LRATD2 of Homo sapiens (Human).